Here is a 2309-residue protein sequence, read N- to C-terminus: Collagen alpha-4(VI) chain (2309 aa).

An N-terminal signal peptide occupies residues 1–22 (MGTWKTFWLIISLAAGLGFVKS). The interval 21–1410 (KSQRIVCREA…TCCNMYAKCY (1390 aa)) is nonhelical region. 6 VWFA domains span residues 34–206 (DIVF…AQKL), 235–413 (DIVF…LQAL), 430–653 (DVVF…FQRV), 634–811 (DLVF…GNKL), 849–1018 (DIYF…IRDI), and 1030–1199 (DIIF…EKEI). Residue Asn-188 is glycosylated (N-linked (GlcNAc...) asparagine). The N-linked (GlcNAc...) asparagine glycan is linked to Asn-754. The N-linked (GlcNAc...) asparagine glycan is linked to Asn-1114. Residues 1411 to 1744 (GDDGIRGEPG…GKMGTKGSKG (334 aa)) are triple-helical region. Positions 1414-1430 (GIRGEPGSRGEQGERGL) are enriched in basic and acidic residues. Residues 1414–1746 (GIRGEPGSRG…MGTKGSKGLA (333 aa)) form a disordered region. Over residues 1480–1489 (GEEGVGGLDG) the composition is skewed to gly residues. Positions 1527–1529 (RGD) match the Cell attachment site motif. Composition is skewed to low complexity over residues 1605 to 1621 (PRGRQGPPGFFGQKGDP) and 1650 to 1669 (PAGERGPRGQQGPRGQPGLF). The tract at residues 1745 to 2309 (LADRTPCEIV…EGECLNYVLK (565 aa)) is nonhelical region. 2 consecutive VWFA domains span residues 1776 to 1957 (EVVF…ASCT) and 1982 to 2187 (DLVF…LNLL). Residues 2208–2210 (RGD) carry the Cell attachment site motif. The segment at 2262–2300 (ALGSHGKDRADTEDIDQETPAKGRHLGPTHGPCPMGPEE) is disordered.

It belongs to the type VI collagen family. In terms of assembly, trimers composed of three different chains: alpha-1(VI), alpha-2(VI), and alpha-3(VI) or alpha-4(VI) or alpha-5(VI) or alpha-6(VI). In terms of processing, prolines at the third position of the tripeptide repeating unit (G-X-Y) are hydroxylated in some or all of the chains. As to expression, in newborn, it is expressed in lung, kidney, brain, intestine, skin, sternum and, at weak level, calvaria. In adult, it is almost absent with some weak expression in ovary and very weak expression in spleen, lung, uterus and brain.

Its subcellular location is the secreted. The protein localises to the extracellular space. It localises to the extracellular matrix. In terms of biological role, collagen VI acts as a cell-binding protein. This Mus musculus (Mouse) protein is Collagen alpha-4(VI) chain (Col6a4).